A 144-amino-acid polypeptide reads, in one-letter code: Large ribosomal subunit protein uL11 (144 aa).

Belongs to the universal ribosomal protein uL11 family. Part of the ribosomal stalk of the 50S ribosomal subunit. Interacts with L10 and the large rRNA to form the base of the stalk. L10 forms an elongated spine to which L12 dimers bind in a sequential fashion forming a multimeric L10(L12)X complex. Post-translationally, one or more lysine residues are methylated.

Functionally, forms part of the ribosomal stalk which helps the ribosome interact with GTP-bound translation factors. The protein is Large ribosomal subunit protein uL11 of Rhodococcus opacus (strain B4).